The primary structure comprises 130 residues: Small ribosomal subunit protein uS9 (130 aa).

It belongs to the universal ribosomal protein uS9 family.

In Serratia proteamaculans (strain 568), this protein is Small ribosomal subunit protein uS9.